The sequence spans 139 residues: Ribonuclease VapC36 (139 aa).

The region spanning 1 to 127 is the PINc domain; it reads MIVDTSAVVA…GNDFPQTDLE (127 aa). Residues Asp4 and Asp100 each contribute to the Mg(2+) site.

Belongs to the PINc/VapC protein family. Mg(2+) serves as cofactor.

Functionally, toxic component of a type II toxin-antitoxin (TA) system. An RNase. Its cognate antitoxin is VapB36. This chain is Ribonuclease VapC36, found in Mycobacterium tuberculosis (strain ATCC 25618 / H37Rv).